A 369-amino-acid polypeptide reads, in one-letter code: Pulmonary surfactant-associated protein D (369 aa).

A signal peptide spans 1–20 (MLLLPLSVLLLLTQPWRSLG). An S-nitrosocysteine mark is found at cysteine 35 and cysteine 40. The segment at 41-215 (SPPEDGLPGR…ERGAKGESGL (175 aa)) is disordered. In terms of domain architecture, Collagen-like spans 46-216 (GLPGRDGRDG…RGAKGESGLA (171 aa)). Residues 47–65 (LPGRDGRDGREGPRGEKGD) show a composition bias toward basic and acidic residues. Proline 78 carries the 4-hydroxyproline modification. Residue lysine 87 is modified to 5-hydroxylysine. An N-linked (GlcNAc...) asparagine glycan is attached at asparagine 90. Proline 96 carries the 4-hydroxyproline modification. Residue lysine 99 is modified to 5-hydroxylysine. The segment covering 139–148 (GPKGGVGAPG) has biased composition (gly residues). 4-hydroxyproline occurs at positions 165 and 171. Low complexity predominate over residues 165–191 (PGEPGAPGRAGAPGPAGAIGPQGPSGA). Over residues 198 to 210 (KGDRGTPGERGAK) the composition is skewed to basic and acidic residues. Positions 217–248 (EVNALRQRVGILEGQLQRLQNAFSQYKKAMLF) form a coiled coil. Residues 254-369 (VGEKIFKTEG…GEQRLVICEF (116 aa)) enclose the C-type lectin domain. 2 disulfide bridges follow: cysteine 275/cysteine 367 and cysteine 345/cysteine 359.

Belongs to the SFTPD family. In terms of assembly, oligomeric complex of 4 set of homotrimers. In terms of processing, hydroxylation on proline residues within the sequence motif, GXPG, is most likely to be 4-hydroxy as this fits the requirement for 4-hydroxylation in vertebrates. S-nitrosylation at Cys-35 and Cys-40 alters the quaternary structure which results in a pro-inflammatory chemoattractive signaling activity with macrophages.

Its subcellular location is the secreted. It is found in the extracellular space. The protein localises to the extracellular matrix. It localises to the surface film. Contributes to the lung's defense against inhaled microorganisms, organic antigens and toxins. Interacts with compounds such as bacterial lipopolysaccharides, oligosaccharides and fatty acids and modulates leukocyte action in immune response. May participate in the extracellular reorganization or turnover of pulmonary surfactant. Binds strongly maltose residues and to a lesser extent other alpha-glucosyl moieties. In Bos taurus (Bovine), this protein is Pulmonary surfactant-associated protein D (SFTPD).